The primary structure comprises 350 residues: MKKIRLELVYLRAIICAIIIITHLLTQITLKHENMEGGSLVLQFYIRNIVIFGTPCFIILSQLLTTLNYQKVTYRYLTTRVKYILIPYILMGLFYSYSESLLTDSSFNKQFIENVLLGQWYGYFIVVIMQFFILSYIIFKINYNLFNSKILLLLSFILQQSFLYYFTNNTAFHDTVLHYYPLSENTIIFGWIFYFFLGAYMGYNYERVLNFLERYLVIMIVLAVATYFVFIALANGDYWNVTSFSYSLTPYNSIMFIVILGICTHFKTILFNTIQMISAFSFFIYLLHPIILDSLFAYTNIFEDNTMVFLAISLLFILGLCIGVGMILREFYIFRFIIGKQPYKLNINAY.

A run of 10 helical transmembrane segments spans residues 7–29 (ELVYLRAIICAIIIITHLLTQIT), 44–66 (FYIRNIVIFGTPCFIILSQLLTT), 79–101 (TRVKYILIPYILMGLFYSYSESL), 116–138 (LLGQWYGYFIVVIMQFFILSYII), 145–167 (LFNSKILLLLSFILQQSFLYYFT), 187–204 (IIFGWIFYFFLGAYMGYN), 211–233 (FLERYLVIMIVLAVATYFVFIAL), 243–262 (SFSYSLTPYNSIMFIVILGI), 269–291 (ILFNTIQMISAFSFFIYLLHPII), and 306–328 (TMVFLAISLLFILGLCIGVGMIL).

Belongs to the acyltransferase 3 family.

It localises to the cell membrane. In terms of biological role, presumably involved in the export of the biofilm adhesin polysaccharide poly-beta-1,6-N-acetyl-D-glucosamine (PNAG, also referred to as PIA) across the cell membrane. This chain is Probable poly-beta-1,6-N-acetyl-D-glucosamine export protein (icaC), found in Staphylococcus aureus (strain Mu50 / ATCC 700699).